Consider the following 174-residue polypeptide: RNA polymerase sigma factor CarQ (174 aa).

The Polymerase core binding signature appears at 39 to 52 (DLLQATFLSVIRSR). The tract at residues 86 to 106 (YASREDTATPASAAPDDSDPS) is disordered. Positions 136 to 155 (FEEIGALRGISPGAARLRAH) form a DNA-binding region, H-T-H motif.

It belongs to the sigma-70 factor family. ECF subfamily.

Sigma factors are initiation factors that promote the attachment of RNA polymerase to specific initiation sites and are then released. This sigma factor regulates genes for the light induced biosynthesis of carotenoids. This chain is RNA polymerase sigma factor CarQ (carQ), found in Myxococcus xanthus.